Here is a 172-residue protein sequence, read N- to C-terminus: Disulfide bond formation protein B (172 aa).

The Cytoplasmic portion of the chain corresponds to 1 to 11 (MNPFRWSFRAQ). The chain crosses the membrane as a helical span at residues 12-28 (FLLGFLACAGLLAYAIY). The Periplasmic portion of the chain corresponds to 29–46 (VQLHLGLEPCPLCIFQRI). A disulfide bond links Cys-38 and Cys-41. Residues 47–63 (AFAALAVFFLIGALHGP) form a helical membrane-spanning segment. Topologically, residues 64-70 (RAAGARK) are cytoplasmic. Residues 71–88 (VYGVLSFIAAGVGMGIGA) form a helical membrane-spanning segment. The Periplasmic segment spans residues 89–145 (RHVWVQIRPKDMMSSCGPPLSFLSETMGPFEVFRTVLTGTGDCGNIDWRFLGLSMPM). A disulfide bond links Cys-104 and Cys-131. A helical membrane pass occupies residues 146–164 (WSMVWFVGLALWALSAGFK). Over 165–172 (ARRSSLHH) the chain is Cytoplasmic.

This sequence belongs to the DsbB family.

The protein localises to the cell inner membrane. Its function is as follows. Required for disulfide bond formation in some periplasmic proteins. Acts by oxidizing the DsbA protein. This chain is Disulfide bond formation protein B, found in Xanthomonas oryzae pv. oryzae (strain MAFF 311018).